The following is a 338-amino-acid chain: Holliday junction branch migration complex subunit RuvB (338 aa).

Positions 1–181 (MTTRTISPEK…FGVISRLEFY (181 aa)) are large ATPase domain (RuvB-L). Residues Leu20, Arg21, Gly62, Lys65, Thr66, Thr67, 128 to 130 (EDF), Arg171, Tyr181, and Arg218 contribute to the ATP site. Residue Thr66 participates in Mg(2+) binding. The small ATPAse domain (RuvB-S) stretch occupies residues 182–252 (TDAELSTIVT…VVDESLKLLE (71 aa)). The segment at 255–338 (EKGFDQMDRT…APAPGQGALF (84 aa)) is head domain (RuvB-H). DNA is bound by residues Arg291, Arg310, and Arg315.

This sequence belongs to the RuvB family. As to quaternary structure, homohexamer. Forms an RuvA(8)-RuvB(12)-Holliday junction (HJ) complex. HJ DNA is sandwiched between 2 RuvA tetramers; dsDNA enters through RuvA and exits via RuvB. An RuvB hexamer assembles on each DNA strand where it exits the tetramer. Each RuvB hexamer is contacted by two RuvA subunits (via domain III) on 2 adjacent RuvB subunits; this complex drives branch migration. In the full resolvosome a probable DNA-RuvA(4)-RuvB(12)-RuvC(2) complex forms which resolves the HJ.

The protein resides in the cytoplasm. The catalysed reaction is ATP + H2O = ADP + phosphate + H(+). Its function is as follows. The RuvA-RuvB-RuvC complex processes Holliday junction (HJ) DNA during genetic recombination and DNA repair, while the RuvA-RuvB complex plays an important role in the rescue of blocked DNA replication forks via replication fork reversal (RFR). RuvA specifically binds to HJ cruciform DNA, conferring on it an open structure. The RuvB hexamer acts as an ATP-dependent pump, pulling dsDNA into and through the RuvAB complex. RuvB forms 2 homohexamers on either side of HJ DNA bound by 1 or 2 RuvA tetramers; 4 subunits per hexamer contact DNA at a time. Coordinated motions by a converter formed by DNA-disengaged RuvB subunits stimulates ATP hydrolysis and nucleotide exchange. Immobilization of the converter enables RuvB to convert the ATP-contained energy into a lever motion, pulling 2 nucleotides of DNA out of the RuvA tetramer per ATP hydrolyzed, thus driving DNA branch migration. The RuvB motors rotate together with the DNA substrate, which together with the progressing nucleotide cycle form the mechanistic basis for DNA recombination by continuous HJ branch migration. Branch migration allows RuvC to scan DNA until it finds its consensus sequence, where it cleaves and resolves cruciform DNA. This Geobacter sulfurreducens (strain ATCC 51573 / DSM 12127 / PCA) protein is Holliday junction branch migration complex subunit RuvB.